We begin with the raw amino-acid sequence, 276 residues long: FALAHMVNDFEILKSYLDEGANGIESDITFSDEGEPEYTFHGVPCDCRRWCDRSVGIDEYLQHLSDLTTPGNPKFRENLLVVVLDLKLNGLSQDALRQGGLRLADKLAAHYWTGNRKARAYFIISVPKTSESEFMRTFRKELDEINFGDMSAKIGFDFTDNGDFKETQKVYEGLGISEHIWASDGITNCIPLLFRGTDRLEDLTRQRDEPGYKYIDKVYAWTYDKETSVVKALELGVDGVMTNYADFVIKVLNKPEHSSKYRLATYDDNPFEKFTA.

H5 is an active-site residue. Mg(2+) contacts are provided by E25 and D27. The active-site Nucleophile is H41. 2 disulfides stabilise this stretch: C45-C51 and C47-C189. D85 contributes to the Mg(2+) binding site.

The protein belongs to the arthropod phospholipase D family. Class II subfamily. It depends on Mg(2+) as a cofactor. Expressed by the venom gland.

It localises to the secreted. The catalysed reaction is an N-(acyl)-sphingosylphosphocholine = an N-(acyl)-sphingosyl-1,3-cyclic phosphate + choline. It carries out the reaction an N-(acyl)-sphingosylphosphoethanolamine = an N-(acyl)-sphingosyl-1,3-cyclic phosphate + ethanolamine. It catalyses the reaction a 1-acyl-sn-glycero-3-phosphocholine = a 1-acyl-sn-glycero-2,3-cyclic phosphate + choline. The enzyme catalyses a 1-acyl-sn-glycero-3-phosphoethanolamine = a 1-acyl-sn-glycero-2,3-cyclic phosphate + ethanolamine. Functionally, dermonecrotic toxins cleave the phosphodiester linkage between the phosphate and headgroup of certain phospholipids (sphingolipid and lysolipid substrates), forming an alcohol (often choline) and a cyclic phosphate. This toxin acts on sphingomyelin (SM). It may also act on ceramide phosphoethanolamine (CPE), lysophosphatidylcholine (LPC) and lysophosphatidylethanolamine (LPE), but not on lysophosphatidylserine (LPS), and lysophosphatidylglycerol (LPG). It acts by transphosphatidylation, releasing exclusively cyclic phosphate products as second products. Induces dermonecrosis, hemolysis, increased vascular permeability, edema, inflammatory response, and platelet aggregation. The chain is Dermonecrotic toxin LspiSicTox-betaIE4ii from Loxosceles spinulosa (Recluse spider).